A 737-amino-acid chain; its full sequence is Catalase-peroxidase (737 aa).

A cross-link (tryptophyl-tyrosyl-methioninium (Trp-Tyr) (with M-251)) is located at residues 102–225; that stretch reads WHSAGTYRTG…LGAVQMGLIY (124 aa). Residue His-103 is the Proton acceptor of the active site. The tryptophyl-tyrosyl-methioninium (Tyr-Met) (with W-102) cross-link spans 225-251; sequence YVNPEGPNGKPDPLAAAHDIRETFARM. His-266 serves as a coordination point for heme b.

The protein belongs to the peroxidase family. Peroxidase/catalase subfamily. In terms of assembly, homodimer or homotetramer. Requires heme b as cofactor. Post-translationally, formation of the three residue Trp-Tyr-Met cross-link is important for the catalase, but not the peroxidase activity of the enzyme.

It catalyses the reaction H2O2 + AH2 = A + 2 H2O. The catalysed reaction is 2 H2O2 = O2 + 2 H2O. Its function is as follows. Bifunctional enzyme with both catalase and broad-spectrum peroxidase activity. The protein is Catalase-peroxidase of Caulobacter sp. (strain K31).